The sequence spans 747 residues: Beta-glucosidase BoGH3A (747 aa).

The N-terminal stretch at 1-26 is a signal peptide; it reads MIIGIMKTFLLTICFLSVQTGMVAIA. Residue Asp-273 is part of the active site.

The protein belongs to the glycosyl hydrolase 3 family.

The protein resides in the periplasm. The enzyme catalyses Hydrolysis of terminal, non-reducing beta-D-glucosyl residues with release of beta-D-glucose.. The protein operates within glucan metabolism; xyloglucan degradation. Its function is as follows. Catalyzes the hydrolysis of terminal, non-reducing beta-D-glucosyl residues with release of beta-D-glucose in xyloglucan degradation, leading to remove the backbone 'G' units. The chain is Beta-glucosidase BoGH3A from Bacteroides ovatus (strain ATCC 8483 / DSM 1896 / JCM 5824 / BCRC 10623 / CCUG 4943 / NCTC 11153).